The following is a 322-amino-acid chain: N-acetyl-gamma-glutamyl-phosphate reductase (322 aa).

Cysteine 132 is an active-site residue.

It belongs to the NAGSA dehydrogenase family. Type 1 subfamily.

It localises to the cytoplasm. The catalysed reaction is N-acetyl-L-glutamate 5-semialdehyde + phosphate + NADP(+) = N-acetyl-L-glutamyl 5-phosphate + NADPH + H(+). The protein operates within amino-acid biosynthesis; L-arginine biosynthesis; N(2)-acetyl-L-ornithine from L-glutamate: step 3/4. Catalyzes the NADPH-dependent reduction of N-acetyl-5-glutamyl phosphate to yield N-acetyl-L-glutamate 5-semialdehyde. In Bacteroides thetaiotaomicron (strain ATCC 29148 / DSM 2079 / JCM 5827 / CCUG 10774 / NCTC 10582 / VPI-5482 / E50), this protein is N-acetyl-gamma-glutamyl-phosphate reductase.